We begin with the raw amino-acid sequence, 155 residues long: 3-hydroxyacyl-[acyl-carrier-protein] dehydratase FabZ (155 aa).

Histidine 59 is a catalytic residue.

Belongs to the thioester dehydratase family. FabZ subfamily.

The protein localises to the cytoplasm. The catalysed reaction is a (3R)-hydroxyacyl-[ACP] = a (2E)-enoyl-[ACP] + H2O. Involved in unsaturated fatty acids biosynthesis. Catalyzes the dehydration of short chain beta-hydroxyacyl-ACPs and long chain saturated and unsaturated beta-hydroxyacyl-ACPs. This is 3-hydroxyacyl-[acyl-carrier-protein] dehydratase FabZ from Bartonella henselae (strain ATCC 49882 / DSM 28221 / CCUG 30454 / Houston 1) (Rochalimaea henselae).